Reading from the N-terminus, the 94-residue chain is Co-chaperonin GroES (94 aa).

This sequence belongs to the GroES chaperonin family. In terms of assembly, heptamer of 7 subunits arranged in a ring. Interacts with the chaperonin GroEL.

Its subcellular location is the cytoplasm. Functionally, together with the chaperonin GroEL, plays an essential role in assisting protein folding. The GroEL-GroES system forms a nano-cage that allows encapsulation of the non-native substrate proteins and provides a physical environment optimized to promote and accelerate protein folding. GroES binds to the apical surface of the GroEL ring, thereby capping the opening of the GroEL channel. In Leuconostoc citreum (strain KM20), this protein is Co-chaperonin GroES.